The sequence spans 207 residues: Small ribosomal subunit protein uS4c (207 aa).

The S4 RNA-binding domain maps to 92-155 (MRLDNILFRL…TYQSILSKRI (64 aa)).

Belongs to the universal ribosomal protein uS4 family. Part of the 30S ribosomal subunit. Contacts protein S5. The interaction surface between S4 and S5 is involved in control of translational fidelity.

The protein resides in the plastid. The protein localises to the chloroplast. In terms of biological role, one of the primary rRNA binding proteins, it binds directly to 16S rRNA where it nucleates assembly of the body of the 30S subunit. Its function is as follows. With S5 and S12 plays an important role in translational accuracy. In Equisetum scirpoides (Dwarf-scouring rush), this protein is Small ribosomal subunit protein uS4c (rps4).